The following is a 215-amino-acid chain: Orotidine 5'-phosphate decarboxylase (215 aa).

Substrate-binding positions include aspartate 12, lysine 34, 60 to 69, serine 117, 170 to 180, glycine 193, and arginine 194; these read DFKVADIPNT and PGVGAQGGSAA. Lysine 62 (proton donor) is an active-site residue.

It belongs to the OMP decarboxylase family. Type 1 subfamily. Homodimer.

It catalyses the reaction orotidine 5'-phosphate + H(+) = UMP + CO2. It participates in pyrimidine metabolism; UMP biosynthesis via de novo pathway; UMP from orotate: step 2/2. Its function is as follows. Catalyzes the decarboxylation of orotidine 5'-monophosphate (OMP) to uridine 5'-monophosphate (UMP). This Methanococcoides burtonii (strain DSM 6242 / NBRC 107633 / OCM 468 / ACE-M) protein is Orotidine 5'-phosphate decarboxylase.